A 193-amino-acid chain; its full sequence is dCTP deaminase (193 aa).

DCTP is bound by residues 110–115 (RSSLAR), aspartate 128, 136–138 (VLE), tyrosine 171, lysine 178, and glutamine 182. The active-site Proton donor/acceptor is glutamate 138. Residues 169-193 (RPYNRRQDAKYKDQQGAVASRIDKD) are disordered.

It belongs to the dCTP deaminase family. As to quaternary structure, homotrimer.

It carries out the reaction dCTP + H2O + H(+) = dUTP + NH4(+). The protein operates within pyrimidine metabolism; dUMP biosynthesis; dUMP from dCTP (dUTP route): step 1/2. Catalyzes the deamination of dCTP to dUTP. The chain is dCTP deaminase from Pectobacterium atrosepticum (strain SCRI 1043 / ATCC BAA-672) (Erwinia carotovora subsp. atroseptica).